Here is a 349-residue protein sequence, read N- to C-terminus: tRNA pseudouridine synthase D (349 aa).

Phenylalanine 27 contacts substrate. The active-site Nucleophile is the aspartate 80. A substrate-binding site is contributed by asparagine 129. The TRUD domain occupies 155–303 (GVPNYFGAQR…VEASRRAMLL (149 aa)). Phenylalanine 329 is a substrate binding site.

This sequence belongs to the pseudouridine synthase TruD family.

It carries out the reaction uridine(13) in tRNA = pseudouridine(13) in tRNA. Functionally, responsible for synthesis of pseudouridine from uracil-13 in transfer RNAs. This is tRNA pseudouridine synthase D from Salmonella typhi.